Here is a 131-residue protein sequence, read N- to C-terminus: Small ribosomal subunit protein uS8 (131 aa).

Belongs to the universal ribosomal protein uS8 family. In terms of assembly, part of the 30S ribosomal subunit. Contacts proteins S5 and S12.

Its function is as follows. One of the primary rRNA binding proteins, it binds directly to 16S rRNA central domain where it helps coordinate assembly of the platform of the 30S subunit. The polypeptide is Small ribosomal subunit protein uS8 (Bordetella petrii (strain ATCC BAA-461 / DSM 12804 / CCUG 43448)).